The following is a 192-amino-acid chain: dTDP-4-amino-4,6-dideoxy-D-glucose acyltransferase (192 aa).

The protein belongs to the transferase hexapeptide repeat family.

It catalyses the reaction dTDP-4-amino-4,6-dideoxy-alpha-D-glucose + acetyl-CoA = dTDP-4-acetamido-4,6-dideoxy-alpha-D-glucose + CoA + H(+). Its pathway is bacterial outer membrane biogenesis; lipopolysaccharide biosynthesis. Functionally, catalyzes the conversion of dTDP-4-amino-4,6-dideoxy-D-glucose (dTDP-D-Qui4N) to dTDP-4-acetamido-4,6-dideoxy-D-glucose (dTDP-D-Qui4NAc). The sequence is that of dTDP-4-amino-4,6-dideoxy-D-glucose acyltransferase (vioB) from Escherichia coli.